Reading from the N-terminus, the 874-residue chain is Alanine--tRNA ligase (874 aa).

Zn(2+) is bound by residues His562, His566, Cys664, and His668.

It belongs to the class-II aminoacyl-tRNA synthetase family. Requires Zn(2+) as cofactor.

The protein localises to the cytoplasm. The catalysed reaction is tRNA(Ala) + L-alanine + ATP = L-alanyl-tRNA(Ala) + AMP + diphosphate. Its function is as follows. Catalyzes the attachment of alanine to tRNA(Ala) in a two-step reaction: alanine is first activated by ATP to form Ala-AMP and then transferred to the acceptor end of tRNA(Ala). Also edits incorrectly charged Ser-tRNA(Ala) and Gly-tRNA(Ala) via its editing domain. This chain is Alanine--tRNA ligase, found in Neisseria meningitidis serogroup A / serotype 4A (strain DSM 15465 / Z2491).